We begin with the raw amino-acid sequence, 228 residues long: Lipoprotein-releasing system ATP-binding protein LolD (228 aa).

An ABC transporter domain is found at 9–228; it reads LEAHDIQKNF…ELINGCLYRR (220 aa). 44 to 51 contributes to the ATP binding site; that stretch reads GRSGEGKS.

This sequence belongs to the ABC transporter superfamily. Lipoprotein translocase (TC 3.A.1.125) family. As to quaternary structure, the complex is composed of two ATP-binding proteins (LolD) and two transmembrane proteins (LolC and LolE).

It localises to the cell inner membrane. Functionally, part of the ABC transporter complex LolCDE involved in the translocation of mature outer membrane-directed lipoproteins, from the inner membrane to the periplasmic chaperone, LolA. Responsible for the formation of the LolA-lipoprotein complex in an ATP-dependent manner. This chain is Lipoprotein-releasing system ATP-binding protein LolD, found in Protochlamydia amoebophila (strain UWE25).